The following is a 342-amino-acid chain: uncharacterized protein (342 aa).

9-31 (LIFGGTTGIGLMTTIDFIIHNTS) contacts NADP(+). S208 contacts substrate. Y222 (proton acceptor) is an active-site residue.

This sequence belongs to the short-chain dehydrogenases/reductases (SDR) family.

This is an uncharacterized protein from Acanthamoeba polyphaga (Amoeba).